A 227-amino-acid chain; its full sequence is 4-nitrobenzoate reductase (227 aa).

15–19 (RRAVR) lines the FMN pocket. Positions 45, 102, and 107 each coordinate NAD(+). Arg213 serves as a coordination point for FMN.

It belongs to the nitroreductase family. Requires FMN as cofactor.

It catalyses the reaction 4-nitrobenzoate + 2 NADH + 2 H(+) = 4-hydroxylaminobenzoate + 2 NAD(+) + H2O. Nitroreductase involved in the degradation of nitroaromatic compounds. Catalyzes the conversion of 4-nitrobenzoate to 4-hydroxylaminobenzoate. Required for the catabolism of 4-nitrotoluene. The sequence is that of 4-nitrobenzoate reductase from Pseudomonas putida (Arthrobacter siderocapsulatus).